The following is a 311-amino-acid chain: Oxygen-dependent coproporphyrinogen-III oxidase (311 aa).

Serine 93 contributes to the substrate binding site. Histidine 97 and histidine 107 together coordinate a divalent metal cation. Catalysis depends on histidine 107, which acts as the Proton donor. 109–111 is a substrate binding site; the sequence is NVR. Histidine 153 and histidine 184 together coordinate a divalent metal cation. Positions 252–287 are important for dimerization; the sequence is YVEFNLVFDRGTLFGLQSGGRTESILMSLPPVVKWR. 270-272 lines the substrate pocket; it reads GGR.

Belongs to the aerobic coproporphyrinogen-III oxidase family. Homodimer. The cofactor is a divalent metal cation.

Its subcellular location is the cytoplasm. It carries out the reaction coproporphyrinogen III + O2 + 2 H(+) = protoporphyrinogen IX + 2 CO2 + 2 H2O. It functions in the pathway porphyrin-containing compound metabolism; protoporphyrin-IX biosynthesis; protoporphyrinogen-IX from coproporphyrinogen-III (O2 route): step 1/1. Its function is as follows. Involved in the heme biosynthesis. Catalyzes the aerobic oxidative decarboxylation of propionate groups of rings A and B of coproporphyrinogen-III to yield the vinyl groups in protoporphyrinogen-IX. This Aromatoleum aromaticum (strain DSM 19018 / LMG 30748 / EbN1) (Azoarcus sp. (strain EbN1)) protein is Oxygen-dependent coproporphyrinogen-III oxidase.